The sequence spans 6359 residues: Bacitracin synthase 3 (6359 aa).

A domain 1 (isoleucine-activating) region spans residues 461 to 1034 (LHELFEEQAM…IKGLGEYIRS (574 aa)). Residues 941–953 (VDRKALPEPDRTA) show a composition bias toward basic and acidic residues. The disordered stretch occupies residues 941-962 (VDRKALPEPDRTAGAENEYEAP). 5 Carrier domains span residues 961 to 1036 (APRN…RSTK), 1993 to 2067 (APRN…KKQS), 3497 to 3572 (APRN…ESMK), 4539 to 4613 (PPRN…KAES), and 6047 to 6122 (PPRH…KHAQ). Residues Ser996, Ser2028, and Ser3532 each carry the O-(pantetheine 4'-phosphoryl)serine modification. The domain 2 (D-phenylalanine-activating) stretch occupies residues 1517 to 2064 (FEDQTLTYRQ…RIKDLAKYVK (548 aa)). The domain 3 (histidine-activating) stretch occupies residues 2999–3570 (NKTIHQLFEE…IKDIGDFIES (572 aa)). The interval 4047-4612 (EQTAVVYADE…KSLSRYVKAE (566 aa)) is domain 4 (D-aspartic acid-activating). Residues 4521 to 4544 (IDTAALPEPQPGKETEYEPPRNET) are disordered. Residues 4531 to 4544 (PGKETEYEPPRNET) are compositionally biased toward basic and acidic residues. 2 positions are modified to O-(pantetheine 4'-phosphoryl)serine: Ser4574 and Ser6082. The domain 5 (asparagine-activating) stretch occupies residues 5549–6129 (IHRLFEEQAE…HAQDLLKDYT (581 aa)).

The protein belongs to the ATP-dependent AMP-binding enzyme family. Large multienzyme complex of BA1, BA2 and BA3. It depends on pantetheine 4'-phosphate as a cofactor.

The catalysed reaction is L-aspartate = D-aspartate. It catalyses the reaction L-phenylalanine + ATP + H2O = D-phenylalanine + AMP + diphosphate + H(+). It participates in antibiotic biosynthesis; bacitracin biosynthesis. Functionally, induces peptide synthesis, activates and incorporates five amino acids, forms a thiazoline ring between the first two amino acids and incorporates a D-glutamine in the fourth position. This Bacillus licheniformis protein is Bacitracin synthase 3 (bacC).